The following is a 274-amino-acid chain: 2,3,4,5-tetrahydropyridine-2,6-dicarboxylate N-succinyltransferase (274 aa).

2 residues coordinate substrate: Arg-104 and Asp-141.

It belongs to the transferase hexapeptide repeat family. In terms of assembly, homotrimer.

It is found in the cytoplasm. The catalysed reaction is (S)-2,3,4,5-tetrahydrodipicolinate + succinyl-CoA + H2O = (S)-2-succinylamino-6-oxoheptanedioate + CoA. It participates in amino-acid biosynthesis; L-lysine biosynthesis via DAP pathway; LL-2,6-diaminopimelate from (S)-tetrahydrodipicolinate (succinylase route): step 1/3. The protein is 2,3,4,5-tetrahydropyridine-2,6-dicarboxylate N-succinyltransferase of Edwardsiella ictaluri (strain 93-146).